The sequence spans 232 residues: Ribose-5-phosphate isomerase A (232 aa).

Substrate is bound by residues threonine 28–threonine 31, aspartate 83–aspartate 86, and lysine 96–glycine 99. The active-site Proton acceptor is the glutamate 105. A substrate-binding site is contributed by lysine 123.

Belongs to the ribose 5-phosphate isomerase family. As to quaternary structure, homodimer.

The catalysed reaction is aldehydo-D-ribose 5-phosphate = D-ribulose 5-phosphate. Its pathway is carbohydrate degradation; pentose phosphate pathway; D-ribose 5-phosphate from D-ribulose 5-phosphate (non-oxidative stage): step 1/1. Functionally, catalyzes the reversible conversion of ribose-5-phosphate to ribulose 5-phosphate. This is Ribose-5-phosphate isomerase A from Rhodopseudomonas palustris (strain ATCC BAA-98 / CGA009).